The sequence spans 731 residues: ARS-binding factor 1 (731 aa).

Residue lysine 18 forms a Glycyl lysine isopeptide (Lys-Gly) (interchain with G-Cter in ubiquitin) linkage. Low complexity-rich tracts occupy residues 84 to 99 (ASSE…NTNP) and 111 to 129 (NNMN…NKVS). Disordered regions lie at residues 84 to 132 (ASSE…SNDS), 146 to 227 (ANTH…DDVH), 251 to 308 (VANV…PSSI), and 439 to 463 (YNDL…GTNL). Positions 149 to 161 (HPDDTNDKVESRS) are enriched in basic and acidic residues. Positions 177-186 (IFKQQGVTIK) are enriched in polar residues. Phosphothreonine is present on threonine 189. Position 193 is a phosphoserine (serine 193). 2 stretches are compositionally biased toward low complexity: residues 270-308 (TNNN…PSSI) and 445-454 (SSSSNNNNNN). Residue serine 467 is modified to Phosphoserine. Residues 475-539 (EISSAGTSSN…PSVNKWSKPD (65 aa)) are disordered. A compositionally biased stretch (low complexity) spans 481 to 510 (TSSNTTKNVNNNKNDSNDDNNGNNNNDASN). Residues serine 554 and serine 618 each carry the phosphoserine modification. Disordered stretches follow at residues 590–643 (RSID…DDKL) and 687–731 (KNTT…LRGQ). The residue at position 624 (serine 624) is a Phosphoserine; by PKC. C-terminal sequence stretches follow at residues 624 to 628 (SKRQH) and 639 to 662 (EDDK…KEVE). Positions 634–643 (LEERNEDDKL) are enriched in basic and acidic residues. Over residues 689 to 698 (TTHHNNHHSQ) the composition is skewed to basic residues. Residue serine 720 is modified to Phosphoserine; by CK2.

It belongs to the BAF1 family. As to quaternary structure, component of the global genome repair (GGR) complex composed of at least ABF1, RAD7 and RAD16. Interacts with PSE1. Post-translationally, extensively phosphorylated on Ser and Thr residues.

The protein localises to the nucleus. Functionally, general regulatory factor (GRF) that contributes to transcriptional activation of a large number of genes, as well as to DNA replication, silencing and telomere structure. Involved in the transcription activation of a subset of ribosomal protein genes. Binds the ARS-elements found in many promoters. Binds to the sequence 5'-TCN(7)ACG-3'. Influences on genome-wide nucleosome occupancy and affects chromatin structure, and probably dynamics. As a component of the global genome repair (GGR) complex, promotes global genome nucleotide excision repair (GG-NER) which removes DNA damage from nontranscribing DNA. Component of the regulatory network controlling mitotic and meiotic cell cycle progression. In Saccharomyces cerevisiae (strain ATCC 204508 / S288c) (Baker's yeast), this protein is ARS-binding factor 1 (ABF1).